We begin with the raw amino-acid sequence, 129 residues long: Small ribosomal subunit protein uS12 (129 aa).

Aspartate 89 bears the 3-methylthioaspartic acid mark. A disordered region spans residues 101-129 (SLDTSGVADRKQSRSKYGAKQPKAGAAKK). The segment covering 116–129 (KYGAKQPKAGAAKK) has biased composition (low complexity).

It belongs to the universal ribosomal protein uS12 family. In terms of assembly, part of the 30S ribosomal subunit. Contacts proteins S8 and S17. May interact with IF1 in the 30S initiation complex.

Its function is as follows. With S4 and S5 plays an important role in translational accuracy. In terms of biological role, interacts with and stabilizes bases of the 16S rRNA that are involved in tRNA selection in the A site and with the mRNA backbone. Located at the interface of the 30S and 50S subunits, it traverses the body of the 30S subunit contacting proteins on the other side and probably holding the rRNA structure together. The combined cluster of proteins S8, S12 and S17 appears to hold together the shoulder and platform of the 30S subunit. The chain is Small ribosomal subunit protein uS12 from Chlorobaculum parvum (strain DSM 263 / NCIMB 8327) (Chlorobium vibrioforme subsp. thiosulfatophilum).